Consider the following 345-residue polypeptide: Ferrochelatase (345 aa).

Positions 215 and 296 each coordinate Fe cation.

It belongs to the ferrochelatase family.

The protein resides in the cytoplasm. It catalyses the reaction heme b + 2 H(+) = protoporphyrin IX + Fe(2+). It participates in porphyrin-containing compound metabolism; protoheme biosynthesis; protoheme from protoporphyrin-IX: step 1/1. In terms of biological role, catalyzes the ferrous insertion into protoporphyrin IX. The polypeptide is Ferrochelatase (Rhodopseudomonas palustris (strain BisB5)).